The following is a 338-amino-acid chain: Solute-binding protein Rfer_1840 (338 aa).

An N-terminal signal peptide occupies residues 1 to 25 (MQRRQLLQSMGGLAASTMPFSLAFA). Residues Arg-47, Tyr-100, Arg-175, Ser-197, 214–218 (TSSTS), and Glu-244 contribute to the malonate site.

Belongs to the bacterial solute-binding protein 7 family. As to quaternary structure, the complex is comprised of an extracytoplasmic solute-binding protein and a heteromeric permease formed by two transmembrane proteins.

The protein resides in the periplasm. Functionally, solute-binding protein that binds malonate (in vitro). Probably part of a tripartite ATP-independent periplasmic (TRAP) transport system that mediates solute transport into the cytoplasm. The polypeptide is Solute-binding protein Rfer_1840 (Albidiferax ferrireducens (strain ATCC BAA-621 / DSM 15236 / T118) (Rhodoferax ferrireducens)).